The sequence spans 264 residues: S-adenosylmethionine decarboxylase proenzyme (264 aa).

S113 acts as the Schiff-base intermediate with substrate; via pyruvic acid in catalysis. Position 113 is a pyruvic acid (Ser); by autocatalysis (S113). H118 (proton acceptor; for processing activity) is an active-site residue. The active-site Proton donor; for catalytic activity is the C141.

It belongs to the prokaryotic AdoMetDC family. Type 2 subfamily. In terms of assembly, heterooctamer of four alpha and four beta chains arranged as a tetramer of alpha/beta heterodimers. The cofactor is pyruvate. Is synthesized initially as an inactive proenzyme. Formation of the active enzyme involves a self-maturation process in which the active site pyruvoyl group is generated from an internal serine residue via an autocatalytic post-translational modification. Two non-identical subunits are generated from the proenzyme in this reaction, and the pyruvate is formed at the N-terminus of the alpha chain, which is derived from the carboxyl end of the proenzyme. The post-translation cleavage follows an unusual pathway, termed non-hydrolytic serinolysis, in which the side chain hydroxyl group of the serine supplies its oxygen atom to form the C-terminus of the beta chain, while the remainder of the serine residue undergoes an oxidative deamination to produce ammonia and the pyruvoyl group blocking the N-terminus of the alpha chain.

The enzyme catalyses S-adenosyl-L-methionine + H(+) = S-adenosyl 3-(methylsulfanyl)propylamine + CO2. It participates in amine and polyamine biosynthesis; S-adenosylmethioninamine biosynthesis; S-adenosylmethioninamine from S-adenosyl-L-methionine: step 1/1. Its function is as follows. Catalyzes the decarboxylation of S-adenosylmethionine to S-adenosylmethioninamine (dcAdoMet), the propylamine donor required for the synthesis of the polyamines spermine and spermidine from the diamine putrescine. In Pseudomonas aeruginosa (strain UCBPP-PA14), this protein is S-adenosylmethionine decarboxylase proenzyme.